The sequence spans 369 residues: Chorismate synthase (369 aa).

2 residues coordinate NADP(+): Arg48 and Arg54. FMN contacts are provided by residues 125-127, 238-239, Gly278, 293-297, and Arg319; these read RSS, NA, and KPTSS.

It belongs to the chorismate synthase family. In terms of assembly, homotetramer. FMNH2 is required as a cofactor.

It catalyses the reaction 5-O-(1-carboxyvinyl)-3-phosphoshikimate = chorismate + phosphate. Its pathway is metabolic intermediate biosynthesis; chorismate biosynthesis; chorismate from D-erythrose 4-phosphate and phosphoenolpyruvate: step 7/7. Functionally, catalyzes the anti-1,4-elimination of the C-3 phosphate and the C-6 proR hydrogen from 5-enolpyruvylshikimate-3-phosphate (EPSP) to yield chorismate, which is the branch point compound that serves as the starting substrate for the three terminal pathways of aromatic amino acid biosynthesis. This reaction introduces a second double bond into the aromatic ring system. The polypeptide is Chorismate synthase (Burkholderia thailandensis (strain ATCC 700388 / DSM 13276 / CCUG 48851 / CIP 106301 / E264)).